A 1014-amino-acid chain; its full sequence is Probable sucrose-phosphate synthase 5 (1014 aa).

2 stretches are compositionally biased toward basic and acidic residues: residues Arg29–Ala41 and Glu49–Thr58. 2 disordered regions span residues Arg29–Glu108 and Gln648–Pro677.

The protein belongs to the glycosyltransferase 1 family. Homodimer or homotetramer. Expressed in germinating seeds.

It catalyses the reaction beta-D-fructose 6-phosphate + UDP-alpha-D-glucose = sucrose 6(F)-phosphate + UDP + H(+). Its pathway is glycan biosynthesis; sucrose biosynthesis; sucrose from D-fructose 6-phosphate and UDP-alpha-D-glucose: step 1/2. Activity is regulated by phosphorylation and moderated by concentration of metabolites and light. Its function is as follows. Plays a role in photosynthetic sucrose synthesis by catalyzing the rate-limiting step of sucrose biosynthesis from UDP-glucose and fructose- 6-phosphate. Involved in the regulation of carbon partitioning in the leaves of plants. May regulate the synthesis of sucrose and therefore play a major role as a limiting factor in the export of photoassimilates out of the leaf. Plays a role for sucrose availability that is essential for plant growth and fiber elongation. The chain is Probable sucrose-phosphate synthase 5 (SPS5) from Oryza sativa subsp. japonica (Rice).